A 517-amino-acid chain; its full sequence is MEGPVLTLGLLAALAVCGSWGLNEEERLIRHLFQEKGYNKELRPVAHKEESVDVALALTLSNLISLKEVEETLTTNVWIEHGWTDNRLKWNAEEFGNISVLRLPPDMVWLPEIVLENNNDGSFQISYSCNVLVYHYGFVYWLPPAIFRSSCPISVTYFPFDWQNCSLKFSSLKYTAKEITLSLKQDAKENRTYPVEWIIIDPEGFTENGEWEIVHRPARVNVDPRAPLDSPSRQDITFYLIIRRKPLFYIINILVPCVLISFMVNLVFYLPADSGEKTSVAISVLLAQSVFLLLISKRLPATSMAIPLIGKFLLFGMVLVTMVVVICVIVLNIHFRTPSTHVLSEGVKKLFLETLPELLHMSRPAEDGPSPGALVRRSSSLGYISKAEEYFLLKSRSDLMFEKQSERHGLARRLTTARRPPASSEQAQQELFNELKPAVDGANFIVNHMRDQNNYNEEKDSWNRVARTVDRLCLFVVTPVMVVGTAWIFLQGVYNQPPPQPFPGDPYSYNVQDKRFI.

An N-terminal signal peptide occupies residues 1-21 (MEGPVLTLGLLAALAVCGSWG). Topologically, residues 22 to 245 (LNEEERLIRH…ITFYLIIRRK (224 aa)) are extracellular. N-linked (GlcNAc...) asparagine glycosylation is found at Asn97 and Asn164. Residues Cys151 and Cys165 are joined by a disulfide bond. The next 3 membrane-spanning stretches (helical) occupy residues 246–270 (PLFYIINILVPCVLISFMVNLVFYL), 278–299 (TSVAISVLLAQSVFLLLISKRL), and 312–333 (FLLFGMVLVTMVVVICVIVLNI). Over 334 to 471 (HFRTPSTHVL…WNRVARTVDR (138 aa)) the chain is Cytoplasmic. Tyr390 carries the post-translational modification Phosphotyrosine; by Tyr-kinases. A helical transmembrane segment spans residues 472 to 490 (LCLFVVTPVMVVGTAWIFL).

Belongs to the ligand-gated ion channel (TC 1.A.9) family. Acetylcholine receptor (TC 1.A.9.1) subfamily. Delta/CHRND sub-subfamily. Pentamer of two alpha chains, and one each of the beta, delta, and gamma (in immature muscle) or epsilon (in mature muscle) chains. The muscle heteropentamer composed of alpha-1, beta-1, delta, epsilon subunits interacts with the alpha-conotoxin ImII.

It is found in the postsynaptic cell membrane. The protein localises to the cell membrane. The catalysed reaction is K(+)(in) = K(+)(out). The enzyme catalyses Na(+)(in) = Na(+)(out). In terms of biological role, after binding acetylcholine, the AChR responds by an extensive change in conformation that affects all subunits and leads to opening of an ion-conducting channel across the plasma membrane. This is Acetylcholine receptor subunit delta from Homo sapiens (Human).